The chain runs to 431 residues: Histidinol dehydrogenase (431 aa).

The NAD(+) site is built by tyrosine 127, glutamine 185, and asparagine 208. Substrate is bound by residues serine 234, glutamine 256, and histidine 259. Residues glutamine 256 and histidine 259 each coordinate Zn(2+). Catalysis depends on proton acceptor residues glutamate 323 and histidine 324. Substrate-binding residues include histidine 324, aspartate 357, glutamate 411, and histidine 416. Zn(2+) is bound at residue aspartate 357. Residue histidine 416 coordinates Zn(2+).

This sequence belongs to the histidinol dehydrogenase family. It depends on Zn(2+) as a cofactor.

The catalysed reaction is L-histidinol + 2 NAD(+) + H2O = L-histidine + 2 NADH + 3 H(+). It functions in the pathway amino-acid biosynthesis; L-histidine biosynthesis; L-histidine from 5-phospho-alpha-D-ribose 1-diphosphate: step 9/9. Catalyzes the sequential NAD-dependent oxidations of L-histidinol to L-histidinaldehyde and then to L-histidine. This is Histidinol dehydrogenase from Vibrio vulnificus (strain YJ016).